The chain runs to 431 residues: ABSCISIC ACID-INSENSITIVE 5-like protein 7 (431 aa).

A disordered region spans residues 1–29 (MGTHINFNNLGGGGHPGGEGSSNQMKPTG). Over residues 10–20 (LGGGGHPGGEG) the composition is skewed to gly residues. Ser-39 and Ser-61 each carry phosphoserine. Residue Ser-110 is modified to Phosphoserine; by CPK32. Residues 133 to 153 (DGNMEGSSGGGGESNVPPGRQ) form a disordered region. Phosphothreonine is present on Thr-155. The span at 319-331 (SPGTSSAENNSLS) shows a compositional bias: polar residues. Residues 319–338 (SPGTSSAENNSLSPVPYVLN) are disordered. The Nuclear localization signal signature appears at 340–347 (GRRSNTGL). The bZIP domain occupies 351–414 (IERRQRRMIK…KNELKETSKR (64 aa)). The interval 353–372 (RRQRRMIKNRESAARSRARK) is basic motif. Residues 372 to 411 (KQAYTLELEAEIEKLKKTNQELQKKQAEMVEMQKNELKET) adopt a coiled-coil conformation. The tract at residues 379 to 393 (LEAEIEKLKKTNQEL) is leucine-zipper.

This sequence belongs to the bZIP family. ABI5 subfamily. In terms of assembly, DNA-binding heterodimer. Interacts with CPK32 and the AFP proteins AFP1, AFP2 and AFP3. Interacts with FREE1 (via C-terminus). Phosphorylated by CPK4 and CPK11 in vitro. In terms of tissue distribution, expressed in roots, leaves, flowers and immatures siliques.

The protein resides in the nucleus. In terms of biological role, functions as a transcriptional activator in the ABA-inducible expression of LTI65/RD29B (AC Q04980). Binds specifically to the ABA-responsive element (ABRE) of the LTI65/RD29B (AC Q04980) gene promoter. Binds to the promoter of FREE1 and activates its transcription. The polypeptide is ABSCISIC ACID-INSENSITIVE 5-like protein 7 (Arabidopsis thaliana (Mouse-ear cress)).